Reading from the N-terminus, the 1154-residue chain is Large proline-rich protein BAG6 (1154 aa).

Position 1 is an N-acetylmethionine (Met-1). The 76-residue stretch at 17-92 folds into the Ubiquitin-like domain; that stretch reads LEVLVKTLDS…HLVERAPPQT (76 aa). Disordered regions lie at residues 87-125, 186-274, 387-442, 463-531, and 568-626; these read RAPP…ASVH, RGGT…HPSP, TMTG…SSHP, QDSG…QGAG, and AQAQ…SAAD. Residue Ser-96 is modified to Phosphoserine. Low complexity predominate over residues 96-112; sequence SGASSGTGSASATHGGA. Thr-117 is modified (phosphothreonine). Over residues 209 to 218 the composition is skewed to polar residues; that stretch reads VALNSQTSEP. Repeat unit 1 spans residues 237 to 271; sequence RPPTQTPELAPSGPAPAGPAPAGPAPAPETNAPNH. Residues 237–658 form a 4 X 29 AA approximate repeats region; that stretch reads RPPTQTPELA…MASPTITVAM (422 aa). Residues 249–263 show a composition bias toward pro residues; sequence GPAPAGPAPAGPAPA. Over residues 400–409 the composition is skewed to low complexity; it reads GAEAATPGSA. Residues 410–426 are compositionally biased toward polar residues; that stretch reads QATSLPPSSTTVDSSTE. Repeat unit 2 spans residues 416-444; that stretch reads PSSTTVDSSTEGAPPPGPAPPPASSHPRV. 2 stretches are compositionally biased toward pro residues: residues 428-439 and 508-521; these read APPPGPAPPPAS and PTPP…PGGP. 2 stretches are compositionally biased toward low complexity: residues 568–581 and 591–609; these read AQAQ…AQAP and PATA…TAGP. 2 repeat units span residues 597-624 and 630-658. Pro residues predominate over residues 611–622; that stretch reads PGGPAQPPPPQP. 2 disordered regions span residues 673 to 719 and 968 to 1154; these read QASQ…ESLP and PPQT…ADDP. The segment covering 678–702 has biased composition (pro residues); it reads APPPPPPPPPPPPAPEQQSTPPPGS. Residues Ser-986 and Ser-995 each carry the phosphoserine modification. The segment covering 1029 to 1042 has biased composition (low complexity); that stretch reads AEPWAAAVPPEWVP. The segment at 1032-1062 is required for interaction with GET4; the sequence is WAAAVPPEWVPIIQQDIQSQRKVKPQPPLSD. Positions 1034 to 1076 match the Nuclear localization site motif; it reads AAVPPEWVPIIQQDIQSQRKVKPQPPLSDAYLSGMPAKRRKTM. The sufficient for the delivery of client proteins to the endoplasmic reticulum stretch occupies residues 1044-1154; it reads IQQDIQSQRK…NAHRAFADDP (111 aa). At Thr-1075 the chain carries Phosphothreonine. Residues 1080–1137 are BAG-similar domain, required and sufficient for interaction with UBL4A; sequence GPQLLLSEAVSRAAKAAGARPLTSPESLSRDLEAPEVQESYRQQLRSDIQKRLQEDPN. Residues 1088–1098 are compositionally biased toward low complexity; it reads AVSRAAKAAGA. 2 positions are modified to phosphoserine: Ser-1103 and Ser-1139.

In terms of assembly, component of the BAG6/BAT3 complex, also named BAT3 complex, at least composed of BAG6, UBL4A and GET4/TRC35. Interacts with GET4; the interaction is direct and localizes BAG6 in the cytosol. Interacts with UBL4A; the interaction is direct and required for UBL4A protein stability. Interacts with AIFM1. Interacts with HSPA2. Interacts with CTCFL. Interacts with p300/EP300. Interacts (via ubiquitin-like domain) with RNF126; required for BAG6-dependent ubiquitination of proteins mislocalized to the cytosol. Interacts (via ubiquitin-like domain) with SGTA; SGTA competes with RNF126 by binding the same region of BAG6, thereby promoting deubiquitination of BAG6-target proteins and rescuing them from degradation. Interacts with ricin A chain. Interacts with VCP and AMFR; both form the VCP/p97-AMFR/gp78 complex. Interacts with SYVN1. Interacts with USP13; the interaction is direct and may mediate UBL4A deubiquitination. Interacts with ZFAND2B. Interacts with KPNA2. Interacts with UBQLN4. Post-translationally, ricin can induce a cleavage by the caspase CASP3. The released C-terminal peptide induces apoptosis.

It is found in the cytoplasm. Its subcellular location is the cytosol. It localises to the nucleus. The protein localises to the secreted. The protein resides in the extracellular exosome. In terms of biological role, ATP-independent molecular chaperone preventing the aggregation of misfolded and hydrophobic patches-containing proteins. Functions as part of a cytosolic protein quality control complex, the BAG6/BAT3 complex, which maintains these client proteins in a soluble state and participates in their proper delivery to the endoplasmic reticulum or alternatively can promote their sorting to the proteasome where they undergo degradation. The BAG6/BAT3 complex is involved in the post-translational delivery of tail-anchored/type II transmembrane proteins to the endoplasmic reticulum membrane. Recruited to ribosomes, it interacts with the transmembrane region of newly synthesized tail-anchored proteins and together with SGTA and ASNA1 mediates their delivery to the endoplasmic reticulum. Client proteins that cannot be properly delivered to the endoplasmic reticulum are ubiquitinated by RNF126, an E3 ubiquitin-protein ligase associated with BAG6 and are sorted to the proteasome. SGTA which prevents the recruitment of RNF126 to BAG6 may negatively regulate the ubiquitination and the proteasomal degradation of client proteins. Similarly, the BAG6/BAT3 complex also functions as a sorting platform for proteins of the secretory pathway that are mislocalized to the cytosol either delivering them to the proteasome for degradation or to the endoplasmic reticulum. The BAG6/BAT3 complex also plays a role in the endoplasmic reticulum-associated degradation (ERAD), a quality control mechanism that eliminates unwanted proteins of the endoplasmic reticulum through their retrotranslocation to the cytosol and their targeting to the proteasome. It maintains these retrotranslocated proteins in an unfolded yet soluble state condition in the cytosol to ensure their proper delivery to the proteasome. BAG6 is also required for selective ubiquitin-mediated degradation of defective nascent chain polypeptides by the proteasome. In this context, it may participate in the production of antigenic peptides and play a role in antigen presentation in immune response. BAG6 is also involved in endoplasmic reticulum stress-induced pre-emptive quality control, a mechanism that selectively attenuates the translocation of newly synthesized proteins into the endoplasmic reticulum and reroutes them to the cytosol for proteasomal degradation. BAG6 may ensure the proper degradation of these proteins and thereby protects the endoplasmic reticulum from protein overload upon stress. By inhibiting the polyubiquitination and subsequent proteasomal degradation of HSPA2 it may also play a role in the assembly of the synaptonemal complex during spermatogenesis. Also positively regulates apoptosis by interacting with and stabilizing the proapoptotic factor AIFM1. By controlling the steady-state expression of the IGF1R receptor, indirectly regulates the insulin-like growth factor receptor signaling pathway. Its function is as follows. Involved in DNA damage-induced apoptosis: following DNA damage, accumulates in the nucleus and forms a complex with p300/EP300, enhancing p300/EP300-mediated p53/TP53 acetylation leading to increase p53/TP53 transcriptional activity. When nuclear, may also act as a component of some chromatin regulator complex that regulates histone 3 'Lys-4' dimethylation (H3K4me2). Functionally, released extracellularly via exosomes, it is a ligand of the natural killer/NK cells receptor NCR3 and stimulates NK cells cytotoxicity. It may thereby trigger NK cells cytotoxicity against neighboring tumor cells and immature myeloid dendritic cells (DC). May mediate ricin-induced apoptosis. In Mus musculus (Mouse), this protein is Large proline-rich protein BAG6.